A 949-amino-acid chain; its full sequence is AP-1 complex subunit beta-1 (949 aa).

Position 318 is an N6-acetyllysine (lysine 318). A 3'-nitrotyrosine modification is found at tyrosine 574. The tract at residues 584–625 is disordered; that stretch reads GGRGVVHKSLPPRTASSESAESPETAPTGAPPGEQPDVIPAQ. The segment covering 594–611 has biased composition (low complexity); that stretch reads PPRTASSESAESPETAPT.

This sequence belongs to the adaptor complexes large subunit family. As to quaternary structure, adaptor protein complex 1 (AP-1) is a heterotetramer composed of two large adaptins (gamma-type subunit AP1G1 and beta-type subunit AP1B1), a medium adaptin (mu-type subunit AP1M1 or AP1M2) and a small adaptin (sigma-type subunit AP1S1 or AP1S2 or AP1S3). Widely expressed.

It localises to the golgi apparatus. The protein localises to the cytoplasmic vesicle. Its subcellular location is the clathrin-coated vesicle membrane. In terms of biological role, subunit of clathrin-associated adaptor protein complex 1 that plays a role in protein sorting in the late-Golgi/trans-Golgi network (TGN) and/or endosomes. The AP complexes mediate both the recruitment of clathrin to membranes and the recognition of sorting signals within the cytosolic tails of transmembrane cargo molecules. In Homo sapiens (Human), this protein is AP-1 complex subunit beta-1 (AP1B1).